Consider the following 452-residue polypeptide: Cobyrinate a,c-diamide synthase (452 aa).

One can recognise a GATase cobBQ-type domain in the interval 244–437 (KIAYAYDEAF…VHINLYTYKE (194 aa)). The active-site Nucleophile is cysteine 327.

It belongs to the CobB/CbiA family. It depends on Mg(2+) as a cofactor.

The enzyme catalyses cob(II)yrinate + 2 L-glutamine + 2 ATP + 2 H2O = cob(II)yrinate a,c diamide + 2 L-glutamate + 2 ADP + 2 phosphate + 2 H(+). It participates in cofactor biosynthesis; adenosylcobalamin biosynthesis; cob(II)yrinate a,c-diamide from sirohydrochlorin (anaerobic route): step 10/10. Catalyzes the ATP-dependent amidation of the two carboxylate groups at positions a and c of cobyrinate, using either L-glutamine or ammonia as the nitrogen source. The sequence is that of Cobyrinate a,c-diamide synthase from Caldanaerobacter subterraneus subsp. tengcongensis (strain DSM 15242 / JCM 11007 / NBRC 100824 / MB4) (Thermoanaerobacter tengcongensis).